The primary structure comprises 273 residues: Dermonecrotic toxin LsaSicTox-alphaIB1aiii (273 aa).

Residue His-5 is part of the active site. The Mg(2+) site is built by Glu-25 and Asp-27. The active-site Nucleophile is His-41. Cystine bridges form between Cys-45-Cys-51 and Cys-47-Cys-190. A Mg(2+)-binding site is contributed by Asp-85.

Belongs to the arthropod phospholipase D family. Class II subfamily. Mg(2+) is required as a cofactor. As to expression, expressed by the venom gland.

The protein localises to the secreted. The enzyme catalyses an N-(acyl)-sphingosylphosphocholine = an N-(acyl)-sphingosyl-1,3-cyclic phosphate + choline. The catalysed reaction is an N-(acyl)-sphingosylphosphoethanolamine = an N-(acyl)-sphingosyl-1,3-cyclic phosphate + ethanolamine. It catalyses the reaction a 1-acyl-sn-glycero-3-phosphocholine = a 1-acyl-sn-glycero-2,3-cyclic phosphate + choline. It carries out the reaction a 1-acyl-sn-glycero-3-phosphoethanolamine = a 1-acyl-sn-glycero-2,3-cyclic phosphate + ethanolamine. In terms of biological role, dermonecrotic toxins cleave the phosphodiester linkage between the phosphate and headgroup of certain phospholipids (sphingolipid and lysolipid substrates), forming an alcohol (often choline) and a cyclic phosphate. This toxin acts on sphingomyelin (SM). It may also act on ceramide phosphoethanolamine (CPE), lysophosphatidylcholine (LPC) and lysophosphatidylethanolamine (LPE), but not on lysophosphatidylserine (LPS), and lysophosphatidylglycerol (LPG). It acts by transphosphatidylation, releasing exclusively cyclic phosphate products as second products. Induces dermonecrosis, hemolysis, increased vascular permeability, edema, inflammatory response, and platelet aggregation. In Loxosceles sabina (Tucson recluse spider), this protein is Dermonecrotic toxin LsaSicTox-alphaIB1aiii.